A 303-amino-acid polypeptide reads, in one-letter code: UDP-3-O-acyl-N-acetylglucosamine deacetylase (303 aa).

Residues His78, His237, and Asp241 each coordinate Zn(2+). The active-site Proton donor is His264.

This sequence belongs to the LpxC family. The cofactor is Zn(2+).

The catalysed reaction is a UDP-3-O-[(3R)-3-hydroxyacyl]-N-acetyl-alpha-D-glucosamine + H2O = a UDP-3-O-[(3R)-3-hydroxyacyl]-alpha-D-glucosamine + acetate. It participates in glycolipid biosynthesis; lipid IV(A) biosynthesis; lipid IV(A) from (3R)-3-hydroxytetradecanoyl-[acyl-carrier-protein] and UDP-N-acetyl-alpha-D-glucosamine: step 2/6. Catalyzes the hydrolysis of UDP-3-O-myristoyl-N-acetylglucosamine to form UDP-3-O-myristoylglucosamine and acetate, the committed step in lipid A biosynthesis. The polypeptide is UDP-3-O-acyl-N-acetylglucosamine deacetylase (Stenotrophomonas maltophilia (strain R551-3)).